A 118-amino-acid chain; its full sequence is Large ribosomal subunit protein bL19 (118 aa).

It belongs to the bacterial ribosomal protein bL19 family.

Its function is as follows. This protein is located at the 30S-50S ribosomal subunit interface and may play a role in the structure and function of the aminoacyl-tRNA binding site. In Wolinella succinogenes (strain ATCC 29543 / DSM 1740 / CCUG 13145 / JCM 31913 / LMG 7466 / NCTC 11488 / FDC 602W) (Vibrio succinogenes), this protein is Large ribosomal subunit protein bL19.